The primary structure comprises 45 residues: Large ribosomal subunit protein bL34 (45 aa).

The protein belongs to the bacterial ribosomal protein bL34 family.

This is Large ribosomal subunit protein bL34 from Leifsonia xyli subsp. xyli (strain CTCB07).